The sequence spans 1031 residues: Caprin-2 (1031 aa).

5 disordered regions span residues M1–L27, L364–N458, P500–D520, D605–A658, and R830–P876. Composition is skewed to polar residues over residues V425–T439 and A446–N458. Residues S608 to S646 show a composition bias toward low complexity. Residues R830 to S853 show a composition bias toward polar residues. Residues S852 and S853 each carry the phosphoserine modification. One can recognise a C1q domain in the interval P897–D1031. D982 and E988 together coordinate Ca(2+).

It belongs to the caprin family. As to quaternary structure, homotrimer; via C1q domain. Found in a complex with LRP6, CCNY and CDK14 during G2/M stage; CAPRIN2 functions as a scaffold for the complex by binding to CCNY via its N terminus and to CDK14 via its C terminus. Interacts with LRP5. Interacts with LRP6. As to expression, specifically expressed in brain (at protein level).

It is found in the cytoplasm. Its subcellular location is the cell membrane. Its function is as follows. Promotes phosphorylation of the Wnt coreceptor LRP6, leading to increased activity of the canonical Wnt signaling pathway. Facilitates constitutive LRP6 phosphorylation by CDK14/CCNY during G2/M stage of the cell cycle, which may potentiate cells for Wnt signaling. May regulate the transport and translation of mRNAs, modulating for instance the expression of proteins involved in synaptic plasticity in neurons. Involved in regulation of growth as erythroblasts shift from a highly proliferative state towards their terminal phase of differentiation. May be involved in apoptosis. The chain is Caprin-2 from Mus musculus (Mouse).